Here is a 338-residue protein sequence, read N- to C-terminus: Phenylalanine--tRNA ligase alpha subunit (338 aa).

Glutamate 253 provides a ligand contact to Mg(2+).

It belongs to the class-II aminoacyl-tRNA synthetase family. Phe-tRNA synthetase alpha subunit type 1 subfamily. Tetramer of two alpha and two beta subunits. It depends on Mg(2+) as a cofactor.

It is found in the cytoplasm. The catalysed reaction is tRNA(Phe) + L-phenylalanine + ATP = L-phenylalanyl-tRNA(Phe) + AMP + diphosphate + H(+). The chain is Phenylalanine--tRNA ligase alpha subunit from Geobacter sp. (strain M21).